Reading from the N-terminus, the 365-residue chain is Aminomethyltransferase (365 aa).

This sequence belongs to the GcvT family. In terms of assembly, the glycine cleavage system is composed of four proteins: P, T, L and H.

The enzyme catalyses N(6)-[(R)-S(8)-aminomethyldihydrolipoyl]-L-lysyl-[protein] + (6S)-5,6,7,8-tetrahydrofolate = N(6)-[(R)-dihydrolipoyl]-L-lysyl-[protein] + (6R)-5,10-methylene-5,6,7,8-tetrahydrofolate + NH4(+). Functionally, the glycine cleavage system catalyzes the degradation of glycine. This Synechococcus sp. (strain CC9902) protein is Aminomethyltransferase.